We begin with the raw amino-acid sequence, 357 residues long: 3-isopropylmalate dehydrogenase (357 aa).

Residues Arg97, Arg107, Arg135, and Asp224 each coordinate substrate. 3 residues coordinate Mg(2+): Asp224, Asp248, and Asp252. 282–294 (GSAPDIAGQDLAN) serves as a coordination point for NAD(+).

It belongs to the isocitrate and isopropylmalate dehydrogenases family. LeuB type 1 subfamily. In terms of assembly, homodimer. It depends on Mg(2+) as a cofactor. Mn(2+) is required as a cofactor.

Its subcellular location is the cytoplasm. The catalysed reaction is (2R,3S)-3-isopropylmalate + NAD(+) = 4-methyl-2-oxopentanoate + CO2 + NADH. Its pathway is amino-acid biosynthesis; L-leucine biosynthesis; L-leucine from 3-methyl-2-oxobutanoate: step 3/4. Its function is as follows. Catalyzes the oxidation of 3-carboxy-2-hydroxy-4-methylpentanoate (3-isopropylmalate) to 3-carboxy-4-methyl-2-oxopentanoate. The product decarboxylates to 4-methyl-2 oxopentanoate. This chain is 3-isopropylmalate dehydrogenase, found in Prochlorococcus marinus (strain MIT 9313).